A 1606-amino-acid chain; its full sequence is Fatty acid synthase apf5 (1606 aa).

Positions 142-218 constitute a Carrier domain; the sequence is VPVSAILISL…ETLSTSHDGQ (77 aa). Serine 177 is subject to O-(pantetheine 4'-phosphoryl)serine. The region spanning 996-1539 is the Ketosynthase family 3 (KS3) domain; the sequence is KESLIEVALQ…QKGGQALLVH (544 aa). Active-site for beta-ketoacyl synthase activity residues include cysteine 1182, histidine 1424, and histidine 1465.

Belongs to the thiolase-like superfamily. Fungal fatty acid synthetase subunit alpha family.

It catalyses the reaction a fatty acyl-[ACP] + malonyl-[ACP] + H(+) = a 3-oxoacyl-[ACP] + holo-[ACP] + CO2. The protein operates within secondary metabolite biosynthesis. Its function is as follows. Fatty acid synthase; part of the gene cluster that mediates the biosynthesis of the cyclic tetrapeptide apicidin F (APF). The non-ribosomal peptide synthetase apf1 incorporates four different amino acids to produce apicidin F: L-phenylalanine, D-pipecolic acid (D-pip), N-methoxy-L-tryptophan and L-2-aminooctanedioic acid. L-Phenylalanine is the only proteinogenic amino acid directly used by apf1. The 3 other apf1 substrates are non-proteinogenic and have to be modified by other enzymes of the cluster. Lysine is converted to delta-1-pyrroline-5-carboxylate (P5C) which is reduced to L-pipecolic acid (L-pip) by apf3. L-pip is epimerized to D-pip, probably by apf1 activity, prior to incorporation. L-Tryptophan is N-oxidyzed by one of the cytochrome P450 monooxygenases (apf7 or apf8), and further methylated at the hydroxy group by the O-methyltransferase apf6 to yield N-methoxy-L-tryptophan. The synthesis of the fourth apf1 substrate is more complex. The fatty acid synthase apf5 is involved in the synthesis of the octanoic acid backbone of L-2-aminooctanedioic acid by fixing one acetyl-CoA unit and three malonyl-CoA units. Then one of the cytochrome P450 monooxygenases (apf7 or apf8) may oxidize this backbone to 2-oxooctanoic acid. The aminotransferase apf4 is predicted to catalyze the exchange of the keto group with an amino group. The next step would be the oxidation of 2-aminooctanoic acid by one of the cytochrome P450 monooxygenases (apf7 or apf8). The last step is the oxidation of 2-amino-8-hydroxyoctanoic acid to 2-aminooctanedioic acid is catalyzed by the FAD-dependent monooxygenase apf9. In Gibberella fujikuroi (strain CBS 195.34 / IMI 58289 / NRRL A-6831) (Bakanae and foot rot disease fungus), this protein is Fatty acid synthase apf5.